A 315-amino-acid polypeptide reads, in one-letter code: NAD-dependent protein lipoamidase sirtuin-4, mitochondrial (315 aa).

Residues 1-29 constitute a mitochondrion transit peptide; that stretch reads MRMSFGLTFKRTAKVHWRANFSQQCSLRS. Residues 38-315 enclose the Deacetylase sirtuin-type domain; that stretch reads PPLDPEKVKE…GELLPLIDPR (278 aa). Residues 63-83 and 144-147 contribute to the NAD(+) site; these read GAGI…VGLY and QNVD. The Proton acceptor role is filled by His-162. Residues Cys-170, Cys-173, Cys-221, and Cys-224 each coordinate Zn(2+). NAD(+)-binding positions include 261–263, 287–289, and Cys-305; these read GSS and NIG.

This sequence belongs to the sirtuin family. Class II subfamily. In terms of assembly, interacts with GLUD1, IDE and SLC25A5. Interacts with DLAT and PDHX. Interacts with MCCC1 (via the biotin carboxylation domain). Interacts with PCCA and PC. The cofactor is Zn(2+).

The protein localises to the mitochondrion matrix. It catalyses the reaction N(6)-[(R)-lipoyl]-L-lysyl-[protein] + NAD(+) + H2O = 2''-O-lipoyl-ADP-D-ribose + nicotinamide + L-lysyl-[protein]. The enzyme catalyses N(6)-biotinyl-L-lysyl-[protein] + NAD(+) + H2O = 2''-O-biotinyl-ADP-D-ribose + nicotinamide + L-lysyl-[protein]. The catalysed reaction is N(6)-acetyl-L-lysyl-[protein] + NAD(+) + H2O = 2''-O-acetyl-ADP-D-ribose + nicotinamide + L-lysyl-[protein]. It carries out the reaction L-cysteinyl-[protein] + NAD(+) = S-(ADP-D-ribosyl)-L-cysteinyl-[protein] + nicotinamide + H(+). In terms of biological role, acts as a NAD-dependent protein lipoamidase, biotinylase, deacetylase and ADP-ribosyl transferase. Catalyzes more efficiently removal of lipoyl- and biotinyl- than acetyl-lysine modifications. Inhibits the pyruvate dehydrogenase complex (PDH) activity via the enzymatic hydrolysis of the lipoamide cofactor from the E2 component, DLAT, in a phosphorylation-independent manner. Catalyzes the transfer of ADP-ribosyl groups onto target proteins, including mitochondrial GLUD1, inhibiting GLUD1 enzyme activity. Acts as a negative regulator of mitochondrial glutamine metabolism by mediating mono ADP-ribosylation of GLUD1: expressed in response to DNA damage and negatively regulates anaplerosis by inhibiting GLUD1, leading to block metabolism of glutamine into tricarboxylic acid cycle and promoting cell cycle arrest. In response to mTORC1 signal, SIRT4 expression is repressed, promoting anaplerosis and cell proliferation. Acts as a tumor suppressor. Also acts as a NAD-dependent protein deacetylase: mediates deacetylation of 'Lys-471' of MLYCD, inhibiting its activity, thereby acting as a regulator of lipid homeostasis. Does not seem to deacetylate PC. Controls fatty acid oxidation by inhibiting PPARA transcriptional activation. Impairs SIRT1-PPARA interaction probably through the regulation of NAD(+) levels. Down-regulates insulin secretion. The protein is NAD-dependent protein lipoamidase sirtuin-4, mitochondrial of Bos taurus (Bovine).